We begin with the raw amino-acid sequence, 68 residues long: Neuronal regeneration-related protein (68 aa).

A disordered region spans residues 42 to 68; the sequence is EETGAASLTPPGSREFTSPATSYLHPF.

Interacts with FLNA. Interacts with the latency-associated peptides (LAP) of TGFB1 and TGFB2; the interaction results in a decrease in TGFB autoinduction. Post-translationally, phosphorylated on Ser-59. Phosphorylation decreases stability and activity. As to expression, expressed in brain and fetal lung.

The protein localises to the cytoplasm. In terms of biological role, may have roles in cellular differentiation. Ectopic expression induces differentiation of fibroblast into myofibroblast and myofibroblast ameboid migration. Increases retinoic-acid regulation of lipid-droplet biogenesis. May also have neural functions. Promotes axonal regeneration and augments motility of gliomas. Down-regulates the expression of TGFB1 and TGFB2 but not of TGFB3. May play a role in the regulation of alveolar generation. This is Neuronal regeneration-related protein (Nrep) from Mus musculus (Mouse).